The sequence spans 379 residues: Alkanesulfonate monooxygenase (379 aa).

Belongs to the SsuD family.

It carries out the reaction an alkanesulfonate + FMNH2 + O2 = an aldehyde + FMN + sulfite + H2O + 2 H(+). Catalyzes the desulfonation of aliphatic sulfonates. This chain is Alkanesulfonate monooxygenase, found in Sorangium cellulosum (strain So ce56) (Polyangium cellulosum (strain So ce56)).